The primary structure comprises 230 residues: Sugar fermentation stimulation protein homolog (230 aa).

This sequence belongs to the SfsA family.

This chain is Sugar fermentation stimulation protein homolog, found in Clostridium tetani (strain Massachusetts / E88).